The chain runs to 240 residues: Putative N-acetylmannosamine-6-phosphate 2-epimerase (240 aa).

The protein belongs to the NanE family.

It carries out the reaction an N-acyl-D-glucosamine 6-phosphate = an N-acyl-D-mannosamine 6-phosphate. It functions in the pathway amino-sugar metabolism; N-acetylneuraminate degradation; D-fructose 6-phosphate from N-acetylneuraminate: step 3/5. In terms of biological role, converts N-acetylmannosamine-6-phosphate (ManNAc-6-P) to N-acetylglucosamine-6-phosphate (GlcNAc-6-P). The chain is Putative N-acetylmannosamine-6-phosphate 2-epimerase from Vibrio cholerae serotype O1 (strain ATCC 39315 / El Tor Inaba N16961).